The following is a 153-amino-acid chain: Bifunctional protein GAL10 (153 aa).

The galactowaldenase stretch occupies residues 1–153; sequence MSDDIFLVTG…IPIPEHCPME (153 aa).

In the N-terminal section; belongs to the NAD(P)-dependent epimerase/dehydratase family. This sequence in the C-terminal section; belongs to the aldose epimerase family. The cofactor is NAD(+).

It carries out the reaction UDP-alpha-D-glucose = UDP-alpha-D-galactose. The catalysed reaction is alpha-D-glucose = beta-D-glucose. The protein operates within carbohydrate metabolism; galactose metabolism. It functions in the pathway carbohydrate metabolism; hexose metabolism. Its function is as follows. Mutarotase converts alpha-aldose to the beta-anomer. It is active on D-glucose, L-arabinose, D-xylose, D-galactose, maltose and lactose. The chain is Bifunctional protein GAL10 (GAL10) from Candida maltosa (Yeast).